The chain runs to 660 residues: T-box protein H15 (660 aa).

Polar residues predominate over residues 1–11 (MLLSNQPANTK). Disordered regions lie at residues 1-72 (MLLS…NHNQ), 90-122 (GGNA…DDVD), and 169-266 (QQQQ…PKIV). The segment covering 12 to 22 (PQQTPSPSQTQ) has biased composition (low complexity). The span at 23-33 (NFKSKLQQQIV) shows a compositional bias: polar residues. Positions 35 to 47 (AAAAAAANIANGS) are enriched in low complexity. The span at 48-71 (SHHHHHQNHHHHHPLNNHHNHNHN) shows a compositional bias: basic residues. 2 stretches are compositionally biased toward low complexity: residues 93–108 (APSS…SPAS) and 169–179 (QQQQQQQQQRQ). Basic residues predominate over residues 180–198 (QTHHHATTGKQQRQHHNHH). Positions 199–233 (SSNTNNSSNSGNSNTNSKSSSQRGRSAAAVGAAAT) are enriched in low complexity. Pro residues predominate over residues 234–243 (PSPPPPPPSQ). The T-box DNA-binding region spans 286-472 (LWDKFHELGT…SNPFAKGFRD (187 aa)). The segment at 598–660 (NRTPPPSMAV…PPASNRAESP (63 aa)) is disordered. Residues 600–613 (TPPPSMAVAPPAPA) are compositionally biased toward pro residues. Over residues 614–624 (TPTSSCGSASP) the composition is skewed to low complexity. The span at 643–660 (QVPQHQASPPASNRAESP) shows a compositional bias: polar residues.

The protein localises to the nucleus. The chain is T-box protein H15 (H15) from Drosophila melanogaster (Fruit fly).